We begin with the raw amino-acid sequence, 268 residues long: UPF0328 protein ECU10_1850 (268 aa).

It belongs to the UPF0328 family.

The polypeptide is UPF0328 protein ECU10_1850 (Encephalitozoon cuniculi (strain GB-M1) (Microsporidian parasite)).